The following is a 645-amino-acid chain: Threonine--tRNA ligase (645 aa).

Positions 1 to 63 (MEQINIQFPD…ETDGSIEIVT (63 aa)) constitute a TGS domain. Positions 242–540 (DHRKIGKELE…LTEETKGAFP (299 aa)) are catalytic. Zn(2+) is bound by residues Cys-336, His-387, and His-517.

This sequence belongs to the class-II aminoacyl-tRNA synthetase family. In terms of assembly, homodimer. It depends on Zn(2+) as a cofactor.

It is found in the cytoplasm. The catalysed reaction is tRNA(Thr) + L-threonine + ATP = L-threonyl-tRNA(Thr) + AMP + diphosphate + H(+). Catalyzes the attachment of threonine to tRNA(Thr) in a two-step reaction: L-threonine is first activated by ATP to form Thr-AMP and then transferred to the acceptor end of tRNA(Thr). Also edits incorrectly charged L-seryl-tRNA(Thr). This Staphylococcus aureus (strain JH1) protein is Threonine--tRNA ligase.